Here is a 3460-residue protein sequence, read N- to C-terminus: Reelin (3460 aa).

The signal sequence occupies residues 1 to 25; the sequence is MERSGWARQTFLLALLLGATLRARA. The Reelin domain occupies 26–190; sequence AAGYYPRFSP…GAPTDVTVHP (165 aa). Cys-40 and Cys-126 are joined by a disulfide. Asn-140 carries an N-linked (GlcNAc...) asparagine glycan. A disulfide bond links Cys-154 and Cys-178. Residues Asn-257, Asn-289, and Asn-305 are each glycosylated (N-linked (GlcNAc...) asparagine). A disulfide bridge links Cys-539 with Cys-580. A BNR 1 repeat occupies 592–603; sequence EFSTNHGRSWSL. A disulfide bridge connects residues Cys-608 and Cys-613. Asn-628 carries an N-linked (GlcNAc...) asparagine glycan. The EGF-like 1 domain occupies 670–701; it reads IGPSCLKFCSGRGQCTRHGCKCDPGFSGPACE. Disulfide bonds link Cys-674-Cys-684 and Cys-691-Cys-700. A BNR 2 repeat occupies 798 to 809; sequence HYSYDNGITWKL. The cysteines at positions 894 and 936 are disulfide-linked. A BNR 3 repeat occupies 951–962; sequence EYSTNHGLTWHL. Disulfide bonds link Cys-967/Cys-974, Cys-1033/Cys-1043, and Cys-1050/Cys-1059. The region spanning 1029 to 1060 is the EGF-like 2 domain; it reads IGQQCPNMCSGHGSCDHGICRCDQGYQGTECH. Residues 1156–1167 form a BNR 4 repeat; that stretch reads QYSNNGGIQWHL. N-linked (GlcNAc...) asparagine glycosylation occurs at Asn-1266. Residues Cys-1270 and Cys-1309 are joined by a disulfide bond. Residues 1322–1333 form a BNR 5 repeat; it reads QYSHDAGMSWFL. A disulfide bond links Cys-1338 and Cys-1347. The EGF-like 3 domain occupies 1408–1441; that stretch reads ISEPCPSYCSGHGDCISGVCFCDLGYTAAQGTCV. Residues 1534–1545 form a BNR 6 repeat; that stretch reads QYSNDNGILWHL. N-linked (GlcNAc...) asparagine glycosylation occurs at Asn-1599. A disulfide bridge connects residues Cys-1632 and Cys-1672. The BNR 7 repeat unit spans residues 1685-1696; sequence QYSLNNGKDWHL. Residues Cys-1701 and Cys-1708 are joined by a disulfide bond. An N-linked (GlcNAc...) asparagine glycan is attached at Asn-1749. Residues 1764 to 1795 enclose the EGF-like 4 domain; that stretch reads LASGCPWMCSGRGICDAGRCVCDRGFGGPYCV. Residues 1883-1894 form a BNR 8 repeat; that stretch reads QFSISGGITWHL. N-linked (GlcNAc...) asparagine glycosylation occurs at Asn-1920. The BNR 9 repeat unit spans residues 2042 to 2053; the sequence is EFSRDFGATWHL. Zn(2+) is bound by residues His-2060 and His-2073. Residues 2128-2160 form the EGF-like 5 domain; it reads IGPQCEEMCNGQGSCINGTKCICDPGYSGPTCK. Disulfide bonds link Cys-2132/Cys-2142, Cys-2136/Cys-2148, and Cys-2150/Cys-2159. Residue Asn-2144 is glycosylated (N-linked (GlcNAc...) asparagine). Glu-2178 is a Zn(2+) binding site. Cys-2194 and Cys-2234 form a disulfide bridge. Residues 2249 to 2260 form a BNR 10 repeat; the sequence is QYSLNGGLSWSL. Glu-2263 contacts Zn(2+). 2 N-linked (GlcNAc...) asparagine glycosylation sites follow: Asn-2268 and Asn-2316. 3 disulfides stabilise this stretch: Cys-2347–Cys-2386, Cys-2392–Cys-2558, and Cys-2543–Cys-2583. 3 residues coordinate Zn(2+): Glu-2396, Glu-2398, and His-2459. The BNR 11 repeat unit spans residues 2398–2409; sequence EYSVDLGLSWHP. One can recognise an EGF-like 6 domain in the interval 2477 to 2508; the sequence is IGDGCIDMCSGHGRCIQGNCVCDEQWGGLYCD. A glycan (N-linked (GlcNAc...) asparagine) is linked at Asn-2568. BNR repeat units lie at residues 2597 to 2608 and 2777 to 2788; these read EYSVNGGITWNL and QYSTDFGVSWNY. 5 disulfides stabilise this stretch: Cys-2793/Cys-2800, Cys-2856/Cys-2866, Cys-2860/Cys-2871, Cys-2873/Cys-2882, and Cys-2918/Cys-2965. Positions 2852-2883 constitute an EGF-like 7 domain; it reads LGPGCLDNCRGHGDCLREQCICDPGYSGPNCY. N-linked (GlcNAc...) asparagine glycosylation occurs at Asn-2961. One copy of the BNR 14 repeat lies at 2978–2989; it reads DYSTDGGITWTL. Asn-3015 and Asn-3072 each carry an N-linked (GlcNAc...) asparagine glycan. Residues 3142 to 3154 form a BNR 15 repeat; that stretch reads EYTKDARSDSWQL. The cysteines at positions 3159 and 3169 are disulfide-linked. The N-linked (GlcNAc...) asparagine glycan is linked to Asn-3184. An EGF-like 8 domain is found at 3227 to 3259; it reads IGEACPKLCSGHGYCTTGAICICDESFQGDDCS. Intrachain disulfides connect Cys-3231/Cys-3241, Cys-3235/Cys-3247, Cys-3249/Cys-3258, and Cys-3295/Cys-3345. The stretch at 3362–3373 is one BNR 16 repeat; it reads QYSVNNGITWHV. N-linked (GlcNAc...) asparagine glycans are attached at residues Asn-3411 and Asn-3438.

The protein belongs to the reelin family. In terms of assembly, oligomer of disulfide-linked homodimers. Post-translationally, N-glycosylated and to a lesser extent also O-glycosylated. As to expression, abundantly produced during brain ontogenesis by the Cajal-Retzius cells and other pioneer neurons located in the telencephalic marginal zone and by granule cells of the external granular layer of the cerebellum. In adult brain, preferentially expressed in GABAergic interneurons of prefrontal cortices, temporal cortex, hippocampus and glutamatergic granule cells of cerebellum. Expression is reduced to about 50% in patients with schizophrenia. Also expressed in fetal and adult liver.

Its subcellular location is the secreted. The protein resides in the extracellular space. It localises to the extracellular matrix. In terms of biological role, extracellular matrix serine protease secreted by pioneer neurons that plays a role in layering of neurons in the cerebral cortex and cerebellum by coordinating cell positioning during neurodevelopment. Regulates microtubule function in neurons and neuronal migration. Binding to the extracellular domains of lipoprotein receptors VLDLR and LRP8/APOER2 induces tyrosine phosphorylation of DAB1 and modulation of TAU phosphorylation. Affects migration of sympathetic preganglionic neurons in the spinal cord, where it seems to act as a barrier to neuronal migration. Enzymatic activity is important for the modulation of cell adhesion. The protein is Reelin (RELN) of Homo sapiens (Human).